The primary structure comprises 679 residues: Protein white (679 aa).

The disordered stretch occupies residues 1-34 (MGQEDQEVLIRGGKATSTSAESLNNNNEQPYEQS). The segment covering 15 to 34 (ATSTSAESLNNNNEQPYEQS) has biased composition (polar residues). The 249-residue stretch at 84–332 (NRVKGVFCNE…FSYIGATCPT (249 aa)) folds into the ABC transporter domain. Position 121–128 (121–128 (GSSGAGKT)) interacts with ATP. 5 helical membrane passes run 427–445 (LLQT…LGQQ), 457–477 (AIFL…ITVF), 507–525 (LPLF…YPLI), 534–555 (FFTA…GYLI), and 568–586 (VGPP…FLNS). 2 N-linked (GlcNAc...) asparagine glycosylation sites follow: Asn-628 and Asn-643. A helical transmembrane segment spans residues 651-670 (FDFIGLALLIVGFRISAYIA).

It belongs to the ABC transporter superfamily. ABCG family. Eye pigment precursor importer (TC 3.A.1.204) subfamily.

The protein localises to the membrane. May be part of a membrane-spanning permease system necessary for the transport of pigment precursors into pigment cells responsible for eye color. The chain is Protein white (W) from Ceratitis capitata (Mediterranean fruit fly).